The primary structure comprises 161 residues: Small ribosomal subunit protein uS9 (161 aa).

Polar residues predominate over residues 1-21 (MATLQSLADLNRANTQTSNPE). The disordered stretch occupies residues 1-25 (MATLQSLADLNRANTQTSNPENEAP).

This sequence belongs to the universal ribosomal protein uS9 family.

This is Small ribosomal subunit protein uS9 from Methylorubrum extorquens (strain CM4 / NCIMB 13688) (Methylobacterium extorquens).